A 418-amino-acid polypeptide reads, in one-letter code: MSKILKIKARQVFDSRGNPTIEAEVYSKKLSASAICPSGASTGTYEAFEKRDDNNKKYLGKSVLGTVNLVNTKISKKLIGTNIHDQTRIDTILINLDGTRQKTNLGANAILAVSMAAKKLSAKIKNVPLYKTFLVKNNYKLPYPLMNIINGGAHANNGLRIQEFMIRPDKAKNFSEAMRICFVVINNLKKLIIKKGLSTSVGDEGGFAPMISNNEKALDLVVAAINKSGFKNGKDVSICLDVAANELMKKDKYSIHSKKFVSVDQSIKEYKKIINKYKIKSIEDPFGENDWMAWSKLMKNTNNVQIVGDDLYVTNLERLKKGFLNNSSNSILIKLNQIGTVSETLEVIKFAQIIGYKTIISHRSGDSEDTFIADLAVGTNSNQIKTGSLARSERVAKYNQLLRIEEELGKKASMSKIH.

Gln162 lines the (2R)-2-phosphoglycerate pocket. Glu204 functions as the Proton donor in the catalytic mechanism. Asp241, Glu283, and Asp309 together coordinate Mg(2+). Residues Lys334, Arg363, Ser364, and Lys385 each contribute to the (2R)-2-phosphoglycerate site. The Proton acceptor role is filled by Lys334.

This sequence belongs to the enolase family. Mg(2+) serves as cofactor.

The protein localises to the cytoplasm. It is found in the secreted. Its subcellular location is the cell surface. The enzyme catalyses (2R)-2-phosphoglycerate = phosphoenolpyruvate + H2O. The protein operates within carbohydrate degradation; glycolysis; pyruvate from D-glyceraldehyde 3-phosphate: step 4/5. Functionally, catalyzes the reversible conversion of 2-phosphoglycerate (2-PG) into phosphoenolpyruvate (PEP). It is essential for the degradation of carbohydrates via glycolysis. The protein is Enolase of Pelagibacter ubique (strain HTCC1062).